A 247-amino-acid chain; its full sequence is Probable transcriptional regulatory protein lpg1286 (247 aa).

Belongs to the TACO1 family.

It localises to the cytoplasm. The protein is Probable transcriptional regulatory protein lpg1286 of Legionella pneumophila subsp. pneumophila (strain Philadelphia 1 / ATCC 33152 / DSM 7513).